The following is a 404-amino-acid chain: Homoserine O-succinyltransferase (404 aa).

Residues 1–25 (MTDIQADPAVTAADAAQADTSSPTA) show a composition bias toward low complexity. The segment at 1-30 (MTDIQADPAVTAADAAQADTSSPTAHQGKP) is disordered. The region spanning 75–384 (NAVLICHALN…HGHDAFLLED (310 aa)) is the AB hydrolase-1 domain. Residue Ser-179 is the Nucleophile of the active site. Residue Arg-249 participates in substrate binding. Residues Asp-344 and His-377 contribute to the active site. Asp-378 contributes to the substrate binding site.

This sequence belongs to the AB hydrolase superfamily. MetX family. In terms of assembly, homodimer.

The protein resides in the cytoplasm. It carries out the reaction L-homoserine + succinyl-CoA = O-succinyl-L-homoserine + CoA. It functions in the pathway amino-acid biosynthesis; L-methionine biosynthesis via de novo pathway; O-succinyl-L-homoserine from L-homoserine: step 1/1. Functionally, transfers a succinyl group from succinyl-CoA to L-homoserine, forming succinyl-L-homoserine. The polypeptide is Homoserine O-succinyltransferase (Ralstonia pickettii (strain 12J)).